The following is a 208-amino-acid chain: MARYTGSVCRLCRREGLKLYLKGDRCYTPKCAIDRRSYAPGQHGQGRKKVSEYGLQLREKQKARRIYGILESQFRRYFEKAERQPGITGENLLRLLERRLDNVIYRLGLGASRNEARQLVRHGHFTVNGRRVNIPSYLVKPGDVIAVRDQSKESPRIKELLERAADRTPPAWLEYEADQARARVAALPARDQIDAPVQEHLIVELYSR.

The S4 RNA-binding domain occupies 98 to 161 (RRLDNVIYRL…KESPRIKELL (64 aa)).

This sequence belongs to the universal ribosomal protein uS4 family. Part of the 30S ribosomal subunit. Contacts protein S5. The interaction surface between S4 and S5 is involved in control of translational fidelity.

Its function is as follows. One of the primary rRNA binding proteins, it binds directly to 16S rRNA where it nucleates assembly of the body of the 30S subunit. In terms of biological role, with S5 and S12 plays an important role in translational accuracy. The protein is Small ribosomal subunit protein uS4 of Pelotomaculum thermopropionicum (strain DSM 13744 / JCM 10971 / SI).